Reading from the N-terminus, the 211-residue chain is MTQQYNYHMTRFIISAPDIRHLATDSGIEVAFAGRSNAGKSSALNTLTNQKNLARTSKTPGRTQLINLFEVTDGVRLVDLPGYGYAEVPEQMKIKWQRALGEYLQKRNSLKGLVVLMDIRHPLKDLDQQMIQWAVDVELPVLVLLTKADKLASGARKAQLNMVREAVLPFMGDIQVEAFSSLKKLGVDKLRQKLDNWFSTLEHAEEEQEAE.

The 175-residue stretch at 26-200 (SGIEVAFAGR…RQKLDNWFST (175 aa)) folds into the EngB-type G domain. GTP contacts are provided by residues 34 to 41 (GRSNAGKS), 61 to 65 (GRTQL), 79 to 82 (DLPG), 146 to 149 (TKAD), and 179 to 181 (FSS). Residues S41 and T63 each contribute to the Mg(2+) site.

The protein belongs to the TRAFAC class TrmE-Era-EngA-EngB-Septin-like GTPase superfamily. EngB GTPase family. Mg(2+) serves as cofactor.

Functionally, necessary for normal cell division and for the maintenance of normal septation. This Pectobacterium carotovorum subsp. carotovorum (strain PC1) protein is Probable GTP-binding protein EngB.